The sequence spans 423 residues: Glycine amidinotransferase, mitochondrial (423 aa).

The N-terminal 43 residues, 1 to 43, are a transit peptide targeting the mitochondrion; the sequence is MLRVRCLRGGSRGAEALHYIGSRLGRTVTGWVQRTFQSTQAAT. Phosphoserine occurs at positions 46 and 49. Aspartate 170 provides a ligand contact to arginine. Catalysis depends on residues aspartate 254 and histidine 303. Arginine-binding residues include aspartate 305, arginine 322, serine 354, and serine 355. Lysine 385 is subject to N6-acetyllysine. Cysteine 407 (amidino-cysteine intermediate) is an active-site residue.

This sequence belongs to the amidinotransferase family. In terms of assembly, homodimer.

It is found in the mitochondrion inner membrane. The catalysed reaction is L-arginine + glycine = guanidinoacetate + L-ornithine. It carries out the reaction 4-aminobutanoate + L-arginine = 4-guanidinobutanoate + L-ornithine. The enzyme catalyses beta-alanine + L-arginine = 3-guanidinopropanoate + L-ornithine. It catalyses the reaction taurine + L-arginine = taurocyamine + L-ornithine. Its pathway is amine and polyamine biosynthesis; creatine biosynthesis; creatine from L-arginine and glycine: step 1/2. In terms of biological role, transamidinase that catalyzes the transfer of the amidino group of L-arginine onto the amino moiety of acceptor metabolites such as glycine, beta-alanine, gamma-aminobutyric acid (GABA) and taurine yielding the corresponding guanidine derivatives. Catalyzes the rate-limiting step of creatine biosynthesis, namely the transfer of the amidino group from L-arginine to glycine to generate guanidinoacetate, which is then methylated by GAMT to form creatine. Provides creatine as a source for ATP generation in tissues with high energy demands, in particular skeletal muscle, heart and brain. The chain is Glycine amidinotransferase, mitochondrial (GATM) from Bos taurus (Bovine).